The following is a 311-amino-acid chain: HPr kinase/phosphorylase (311 aa).

Residues His138 and Lys159 contribute to the active site. 153 to 160 (GDSGIGKS) serves as a coordination point for ATP. Ser160 provides a ligand contact to Mg(2+). The Proton acceptor; for phosphorylation activity. Proton donor; for dephosphorylation activity role is filled by Asp177. The interval 201 to 210 (IEIRGVGIID) is important for the catalytic mechanism of both phosphorylation and dephosphorylation. Glu202 serves as a coordination point for Mg(2+). The active site involves Arg243. Residues 264–269 (PVKTGR) form an important for the catalytic mechanism of dephosphorylation region.

This sequence belongs to the HPrK/P family. Homohexamer. It depends on Mg(2+) as a cofactor.

The catalysed reaction is [HPr protein]-L-serine + ATP = [HPr protein]-O-phospho-L-serine + ADP + H(+). The enzyme catalyses [HPr protein]-O-phospho-L-serine + phosphate + H(+) = [HPr protein]-L-serine + diphosphate. In terms of biological role, catalyzes the ATP- as well as the pyrophosphate-dependent phosphorylation of a specific serine residue in HPr, a phosphocarrier protein of the phosphoenolpyruvate-dependent sugar phosphotransferase system (PTS). HprK/P also catalyzes the pyrophosphate-producing, inorganic phosphate-dependent dephosphorylation (phosphorolysis) of seryl-phosphorylated HPr (P-Ser-HPr). The two antagonistic activities of HprK/P are regulated by several intracellular metabolites, which change their concentration in response to the absence or presence of rapidly metabolisable carbon sources (glucose, fructose, etc.) in the growth medium. Therefore, by controlling the phosphorylation state of HPr, HPrK/P is a sensor enzyme that plays a major role in the regulation of carbon metabolism and sugar transport: it mediates carbon catabolite repression (CCR), and regulates PTS-catalyzed carbohydrate uptake and inducer exclusion. The protein is HPr kinase/phosphorylase of Streptococcus pneumoniae serotype 2 (strain D39 / NCTC 7466).